Here is a 293-residue protein sequence, read N- to C-terminus: Ethanolamine ammonia-lyase small subunit (293 aa).

The adenosylcob(III)alamin site is built by valine 207 and glutamate 228.

Belongs to the EutC family. The basic unit is a heterodimer which dimerizes to form tetramers. The heterotetramers trimerize; 6 large subunits form a core ring with 6 small subunits projecting outwards. Requires adenosylcob(III)alamin as cofactor.

It localises to the bacterial microcompartment. The catalysed reaction is ethanolamine = acetaldehyde + NH4(+). The protein operates within amine and polyamine degradation; ethanolamine degradation. Its function is as follows. Catalyzes the deamination of various vicinal amino-alcohols to oxo compounds. Allows this organism to utilize ethanolamine as the sole source of nitrogen and carbon in the presence of external vitamin B12. This chain is Ethanolamine ammonia-lyase small subunit, found in Listeria monocytogenes serotype 4b (strain CLIP80459).